We begin with the raw amino-acid sequence, 123 residues long: Small ribosomal subunit protein uS12c (123 aa).

Residues 1–20 are compositionally biased toward polar residues; the sequence is MPTIQQLIRNTRQPTQNRTK. The interval 1–27 is disordered; that stretch reads MPTIQQLIRNTRQPTQNRTKSPALKAC.

It belongs to the universal ribosomal protein uS12 family. As to quaternary structure, part of the 30S ribosomal subunit.

The protein localises to the plastid. Its subcellular location is the chloroplast. Functionally, with S4 and S5 plays an important role in translational accuracy. Located at the interface of the 30S and 50S subunits. The chain is Small ribosomal subunit protein uS12c (rps12) from Zygnema circumcarinatum (Green alga).